The following is a 926-amino-acid chain: Ubiquitin carboxyl-terminal hydrolase 4 (926 aa).

Residues 205–328 (SQMEILLIDI…WLKSNYGRQV (124 aa)) form the Rhodanese domain. S443 is modified (phosphoserine). The region spanning 562–923 (VGLENLGNSC…NAYVLFYHRV (362 aa)) is the USP domain. C571 functions as the Nucleophile in the catalytic mechanism. The active-site Proton acceptor is the H880.

Belongs to the peptidase C19 family. Interacts with BRO1, RFU1 and VPS32. Associates with the 26S proteasome.

The protein localises to the cytoplasm. It localises to the late endosome membrane. The catalysed reaction is Thiol-dependent hydrolysis of ester, thioester, amide, peptide and isopeptide bonds formed by the C-terminal Gly of ubiquitin (a 76-residue protein attached to proteins as an intracellular targeting signal).. RFU1 is an inhibitor of deubiquitination activity. Its function is as follows. Ubiquitin thioesterase that acts at the late endosome/prevacuolar compartment to recover ubiquitin from ubiquitinated membrane proteins en route to the vacuole. Also removes ubiquitin from soluble proteins targeted to proteasomes. Is essential to maintain a normal level of free ubiquitin. Involved in the ammonium-induced down-regulation of the GAP1 permease and the UME3 destruction in response to oxidative stress. Has a role in the RAD9 checkpoint response to TOP1 poisons. Required for promoting coordination of DNA replication and avoids DNA overreplication. The chain is Ubiquitin carboxyl-terminal hydrolase 4 (DOA4) from Saccharomyces cerevisiae (strain ATCC 204508 / S288c) (Baker's yeast).